We begin with the raw amino-acid sequence, 215 residues long: MADS-box transcription factor 4 (215 aa).

In terms of domain architecture, MADS-box spans 1–61 (MGRGKIEIKR…GKLSDYCTPK (61 aa)). The K-box domain maps to 89–175 (HKSLSAEIDR…AFRVHQQEVE (87 aa)).

In terms of assembly, may interact with the K-box of MADS16. As to expression, highly expressed in lodicules, at intermediate levels in stamens, and weakly in carpels. Expressed in pollen.

The protein resides in the nucleus. Its function is as follows. Probable transcription factor involved in the development of floral organs. B-class protein required for normal development of lodicules and stamens (whorls 2 and 3). May function as a heterodimer with MADS16. The chain is MADS-box transcription factor 4 (MADS4) from Oryza sativa subsp. japonica (Rice).